Consider the following 687-residue polypeptide: Adhesion G-protein coupled receptor G1 (687 aa).

A signal peptide spans 1–25 (MTAQSLLQTTLFLLSLLFLVQGAHG). 26-33 (RGHREDFR) serves as a coordination point for heparin. At 26–402 (RGHREDFRFC…VEVDAVHKHY (377 aa)) the chain is on the extracellular side. Cystine bridges form between C35–C91 and C121–C177. N-linked (GlcNAc...) asparagine glycosylation is found at N39, N148, and N171. 190 to 200 (LKHPQKASRRP) contributes to the heparin binding site. In terms of domain architecture, GAIN-B spans 224–395 (DTVSFEEDRI…AVLMVSSVEV (172 aa)). 4 N-linked (GlcNAc...) asparagine glycosylation sites follow: N234, N303, N324, and N341. 2 disulfide bridges follow: C346–C377 and C366–C379. The GPS stretch occupies residues 346 to 395 (CVFWVEDPTLSSPGHWSSAGCETVRRETQTSCLCNHLTYFAVLMVSSVEV). The segment at 384-397 (YFAVLMVSSVEVDA) is stachel. Residues 403–423 (LSLLSYVGCVVSALACVVTIA) traverse the membrane as a helical segment. The Cytoplasmic portion of the chain corresponds to 424-442 (AYLCSRRKPRDYTIKVHMN). A helical transmembrane segment spans residues 443–463 (LLLAVFLLDTSFLLSEPVALT). The Extracellular segment spans residues 464–470 (GSEAGCR). The chain crosses the membrane as a helical span at residues 471–491 (ASAIFLHFSLLACLSWMGLEG). The Cytoplasmic portion of the chain corresponds to 492–512 (YNLYRLVVEVFGTYVPGYLLK). The helical transmembrane segment at 513–533 (LSAMGWGFPIFLVTLVALVDV) threads the bilayer. At 534–570 (DNYGPIILAVHRTPEGVIYPSMCWIRDSLVSYITNLG) the chain is on the extracellular side. A helical transmembrane segment spans residues 571–591 (LFSLVFLFNMAMLATMVVQIL). The Cytoplasmic segment spans residues 592 to 603 (RLRPHTQKWSHV). Residues 604–624 (LTLLGLSLVLGLPWALIFFSF) traverse the membrane as a helical segment. Residues 625–630 (ASGTFQ) lie on the Extracellular side of the membrane. The helical transmembrane segment at 631-651 (LVILYLFSIITSFQGFLIFIW) threads the bilayer. The Cytoplasmic segment spans residues 652-687 (YWSMRLQARGGPSPLKSNSDSARLPISSGSTSSSRI). The segment at 664–687 (SPLKSNSDSARLPISSGSTSSSRI) is disordered. The segment covering 678–687 (SSGSTSSSRI) has biased composition (low complexity).

This sequence belongs to the G-protein coupled receptor 2 family. LN-TM7 subfamily. In terms of assembly, heterodimer of 2 chains generated by proteolytic processing; the large extracellular N-terminal fragment (ADGRG1 NT) and the membrane-bound C-terminal fragment (ADGRG1-CT) predominantly remain associated and non-covalently linked. ADGRG1 NT self-associates in a trans-trans manner; the homophilic interaction enhances receptor signaling. Interacts with TGM2. Interacts with heparin; leading to the reduction of ADGRG1 shedding. Interacts with COL3A1. Part of a GPCR-tetraspanin complex at least consisting of ADGRG1, CD81, eventually CD9, and GNA11 in which CD81 is enhancing the association of ADGRG1 with GNA11. Post-translationally, autoproteolytically cleaved into 2 fragments; the large extracellular N-terminal fragment (ADGRG1 NT) and the membrane-bound C-terminal fragment (ADGRG1 CT) predominantly remain associated and non-covalently linked. Shedding to yield the secreted ADGRG1 N-terminal fragment seems to involve metalloprotease(s). Ubiquitinated. Undergoes polyubiquitination upon activation.

It localises to the cell membrane. It is found in the secreted. The protein resides in the membrane raft. Its activity is regulated as follows. Forms a heterodimer of 2 chains generated by proteolytic processing that remain associated through non-covalent interactions mediated by the GAIN-B domain. In the inactivated receptor, the Stachel sequence (also named stalk) is embedded in the GAIN-B domain, where it adopts a beta-strand conformation. On activation, the Stachel moves into the 7 transmembrane region and adopts a twisted hook-shaped configuration that forms contacts within the receptor, leading to coupling of a G-alpha protein, which activates signaling. The cleaved GAIN-B and N-terminal domains can then dissociate from the rest of the receptor. In terms of biological role, adhesion G-protein coupled receptor (aGPCR) for steroid hormone 17alpha-hydroxypregnenolone (17-OH), which is involved in cell adhesion and cell-cell interactions. Ligand binding causes a conformation change that triggers signaling via guanine nucleotide-binding proteins (G proteins) and modulates the activity of downstream effectors, such as RhoA pathway. ADGRG1 is coupled to G(12) and/or G(13) G proteins (GNA12 and GNA13, respectively) and mediates the activation Rho small GTPases. Acts as a potent suppressor of ferroptosis: binding to 17-OH-binding initiates signaling that down-regulates CD36 and alleviates ferroptosis-induced liver injury. Ligand-binding also induces cell adhesion activity via association with proteins such as collagen III/COL3A1 and TGM2. Mediates cell matrix adhesion in developing neurons and hematopoietic stem cells. Involved in cortical development, specifically in maintenance of the pial basement membrane integrity and in cortical lamination: association with COL3A1 in the developing brain inhibits neuronal migration via activation of the RhoA pathway. Together with TGM2, acts as a regulator of myelination and myelin repair in oligodendrocyte precursor cells. Acts as a hemostatic sensor of shear force: G protein-coupled receptor signaling is activated in response to shear force in platelets, promoting G(13) G protein signaling, and platelet shape change and aggregation in a COL3A1-dependent manner. Acts as an inhibitor of VEGFA production thereby inhibiting angiogenesis through a signaling pathway mediated by PRKCA. Plays a role in the maintenance of hematopoietic stem cells in bone marrow niche. Plays an essential role in testis development. In Pan troglodytes (Chimpanzee), this protein is Adhesion G-protein coupled receptor G1 (ADGRG1).